The sequence spans 258 residues: Transcription initiation factor TFIID subunit 9B (258 aa).

An N-acetylmethionine modification is found at Met1. Residue Ser147 is modified to Phosphoserine. 2 positions are modified to phosphothreonine: Thr159 and Thr174. Ser177 is subject to Phosphoserine. A compositionally biased stretch (polar residues) spans 227–236 (SSQSTATDSN). Residues 227–258 (SSQSTATDSNPLKRKHDDDDDDDDDDDDNDTM) are disordered. Residues 244 to 258 (DDDDDDDDDDDNDTM) show a composition bias toward acidic residues.

This sequence belongs to the TAF9 family. In terms of assembly, binds TAF5 and TAF6. Component of TFIID and the TATA-binding protein-free TAF complex (TFTC). TFIID is composed of TATA binding protein (TBP) and a number of TBP-associated factors (TAFs). Binds N-terminal domain of p53/TP53 which is essential for transcription.

Its subcellular location is the nucleus. Functionally, essential for cell viability. TAF9 and TAF9L are involved in transcriptional activation as well as repression of distinct but overlapping sets of genes. May have a role in gene regulation associated with apoptosis. TAFs are components of the transcription factor IID (TFIID) complex, the TBP-free TAFII complex (TFTC), the PCAF histone acetylase complex and the STAGA transcription coactivator-HAT complex. TFIID or TFTC are essential for the regulation of RNA polymerase II-mediated transcription. The protein is Transcription initiation factor TFIID subunit 9B (Taf9b) of Rattus norvegicus (Rat).